The following is a 299-amino-acid chain: MRIIVLGSAAGGGHPQWNCHTSASLRAWQQTDGAQRRTQASIAVSADGERWVLINASPDFRQQILATPALWPQHGLRHSPIEAVLLTSGEIDHIVGLLSMRESQRFSLHASSRVLDLLAQNPIFDAVNPHYVSRQPFALDTPLALCGLQLTPFSVPGKVPLFMESRSGGDLAGSNEETLGLTIDDGRRRMHYIPGCAAMTDALRARLQDAELVFFDGTLWRDDEMVQLGISQKTGQRMGHMSIDGPDGTIAAFAPLNVARKIFIHLNTTNPVLNTLSPEFASARASGWEVAHDGLEIAL.

The protein belongs to the PqqB family.

The protein operates within cofactor biosynthesis; pyrroloquinoline quinone biosynthesis. Functionally, may be involved in the transport of PQQ or its precursor to the periplasm. The sequence is that of Coenzyme PQQ synthesis protein B from Xanthomonas axonopodis pv. citri (strain 306).